A 277-amino-acid chain; its full sequence is NAD kinase (277 aa).

Asp-67 acts as the Proton acceptor in catalysis. NAD(+) is bound by residues 67–68 (DG), Arg-72, 137–138 (NE), Lys-148, Arg-165, Asp-167, 178–183 (TGYAMS), Leu-202, and Gln-236.

The protein belongs to the NAD kinase family. A divalent metal cation is required as a cofactor.

It is found in the cytoplasm. It catalyses the reaction NAD(+) + ATP = ADP + NADP(+) + H(+). Its function is as follows. Involved in the regulation of the intracellular balance of NAD and NADP, and is a key enzyme in the biosynthesis of NADP. Catalyzes specifically the phosphorylation on 2'-hydroxyl of the adenosine moiety of NAD to yield NADP. The polypeptide is NAD kinase (Pyrococcus furiosus (strain ATCC 43587 / DSM 3638 / JCM 8422 / Vc1)).